The sequence spans 232 residues: 7-cyano-7-deazaguanine synthase (232 aa).

13–23 (LSGGLDSATVL) serves as a coordination point for ATP. Positions 194, 204, 207, and 210 each coordinate Zn(2+).

This sequence belongs to the QueC family. Zn(2+) is required as a cofactor.

It catalyses the reaction 7-carboxy-7-deazaguanine + NH4(+) + ATP = 7-cyano-7-deazaguanine + ADP + phosphate + H2O + H(+). The protein operates within purine metabolism; 7-cyano-7-deazaguanine biosynthesis. Catalyzes the ATP-dependent conversion of 7-carboxy-7-deazaguanine (CDG) to 7-cyano-7-deazaguanine (preQ(0)). This is 7-cyano-7-deazaguanine synthase from Hydrogenovibrio crunogenus (strain DSM 25203 / XCL-2) (Thiomicrospira crunogena).